The following is a 296-amino-acid chain: Lipoyl synthase (296 aa).

The [4Fe-4S] cluster site is built by Cys-37, Cys-42, Cys-48, Cys-63, Cys-67, Cys-70, and Ser-276. Residues Trp-49–Leu-265 form the Radical SAM core domain.

Belongs to the radical SAM superfamily. Lipoyl synthase family. [4Fe-4S] cluster serves as cofactor.

It localises to the cytoplasm. It carries out the reaction [[Fe-S] cluster scaffold protein carrying a second [4Fe-4S](2+) cluster] + N(6)-octanoyl-L-lysyl-[protein] + 2 oxidized [2Fe-2S]-[ferredoxin] + 2 S-adenosyl-L-methionine + 4 H(+) = [[Fe-S] cluster scaffold protein] + N(6)-[(R)-dihydrolipoyl]-L-lysyl-[protein] + 4 Fe(3+) + 2 hydrogen sulfide + 2 5'-deoxyadenosine + 2 L-methionine + 2 reduced [2Fe-2S]-[ferredoxin]. It participates in protein modification; protein lipoylation via endogenous pathway; protein N(6)-(lipoyl)lysine from octanoyl-[acyl-carrier-protein]: step 2/2. Catalyzes the radical-mediated insertion of two sulfur atoms into the C-6 and C-8 positions of the octanoyl moiety bound to the lipoyl domains of lipoate-dependent enzymes, thereby converting the octanoylated domains into lipoylated derivatives. This chain is Lipoyl synthase, found in Rickettsia canadensis (strain McKiel).